A 67-amino-acid chain; its full sequence is Conotoxin mr3d (67 aa).

Residues 1–19 (MSKLGILLTICLLLFPLTA) form the signal peptide. Residues 20 to 52 (VPLDGDQPADRPAERMQDDISSEHHPFFDPVKR) constitute a propeptide that is removed on maturation. 3 disulfides stabilise this stretch: C53/C65, C54/C62, and C58/C66. A 4-hydroxyproline; partial modification is found at P64. C66 carries the cysteine amide; partial modification.

The protein belongs to the conotoxin M superfamily. Has been found to be hydroxylated and amidated by Han et al. (2006), and to be unmodified by Ju et al. (2022). In terms of tissue distribution, expressed by the venom duct.

It localises to the secreted. This is Conotoxin mr3d from Conus marmoreus (Marble cone).